A 533-amino-acid chain; its full sequence is GMP synthase [glutamine-hydrolyzing] (533 aa).

The 191-residue stretch at 25-215 (SIVIFDFGSQ…VFNICKCHAN (191 aa)) folds into the Glutamine amidotransferase type-1 domain. The active-site Nucleophile is the Cys102. Catalysis depends on residues His189 and Glu191. The region spanning 216 to 408 (WTMGNYIQES…LGLPDEMIWR (193 aa)) is the GMPS ATP-PPase domain. 243–249 (SGGVDSA) is a binding site for ATP.

In terms of assembly, homodimer.

It carries out the reaction XMP + L-glutamine + ATP + H2O = GMP + L-glutamate + AMP + diphosphate + 2 H(+). The protein operates within purine metabolism; GMP biosynthesis; GMP from XMP (L-Gln route): step 1/1. Functionally, catalyzes the synthesis of GMP from XMP. This is GMP synthase [glutamine-hydrolyzing] from Dehalococcoides mccartyi (strain ATCC BAA-2266 / KCTC 15142 / 195) (Dehalococcoides ethenogenes (strain 195)).